The primary structure comprises 294 residues: 4-hydroxy-tetrahydrodipicolinate synthase (294 aa).

T45 serves as a coordination point for pyruvate. The active-site Proton donor/acceptor is Y133. Residue K161 is the Schiff-base intermediate with substrate of the active site. Position 203 (I203) interacts with pyruvate.

It belongs to the DapA family. In terms of assembly, homotetramer; dimer of dimers.

The protein localises to the cytoplasm. It catalyses the reaction L-aspartate 4-semialdehyde + pyruvate = (2S,4S)-4-hydroxy-2,3,4,5-tetrahydrodipicolinate + H2O + H(+). Its pathway is amino-acid biosynthesis; L-lysine biosynthesis via DAP pathway; (S)-tetrahydrodipicolinate from L-aspartate: step 3/4. Its function is as follows. Catalyzes the condensation of (S)-aspartate-beta-semialdehyde [(S)-ASA] and pyruvate to 4-hydroxy-tetrahydrodipicolinate (HTPA). The protein is 4-hydroxy-tetrahydrodipicolinate synthase of Shewanella frigidimarina (strain NCIMB 400).